Here is a 243-residue protein sequence, read N- to C-terminus: MQHFFYKLILSYDGTCYYGYQKQPQKITVQQTFEKALKKMTHQNIPTFAASRTDKGVHSQGQTLHFQTTFFLKPTHFQKTLNYLLPPDIRVRQMNFATPNFHARYSAKSKIYQYVFSKKPLNAFNHHFQIFADKLYFDKITKALKFIEGTHNFFAFTSETQPKNFSKTIFQAFLKETSHKYILVFHGNGFLKYMIRFLVGSLIEIGKNKLSLEQFQAMLLGNTTKKATLLAPSKALVLKKIFY.

The active-site Nucleophile is Asp-54. Tyr-112 serves as a coordination point for substrate.

It belongs to the tRNA pseudouridine synthase TruA family. In terms of assembly, homodimer.

It catalyses the reaction uridine(38/39/40) in tRNA = pseudouridine(38/39/40) in tRNA. Functionally, formation of pseudouridine at positions 38, 39 and 40 in the anticodon stem and loop of transfer RNAs. The sequence is that of tRNA pseudouridine synthase A from Onion yellows phytoplasma (strain OY-M).